We begin with the raw amino-acid sequence, 154 residues long: Large ribosomal subunit protein uL13 (154 aa).

A disordered region spans residues 132 to 154 (PHEAQQPEVLDVKSMNAKNTRSA).

The protein belongs to the universal ribosomal protein uL13 family. As to quaternary structure, part of the 50S ribosomal subunit.

Functionally, this protein is one of the early assembly proteins of the 50S ribosomal subunit, although it is not seen to bind rRNA by itself. It is important during the early stages of 50S assembly. The protein is Large ribosomal subunit protein uL13 of Paracoccus denitrificans (strain Pd 1222).